A 61-amino-acid polypeptide reads, in one-letter code: Small ribosomal subunit protein uS14 (61 aa).

Zn(2+) contacts are provided by Cys-24, Cys-27, Cys-40, and Cys-43.

Belongs to the universal ribosomal protein uS14 family. Zinc-binding uS14 subfamily. In terms of assembly, part of the 30S ribosomal subunit. Contacts proteins S3 and S10. Zn(2+) serves as cofactor.

In terms of biological role, binds 16S rRNA, required for the assembly of 30S particles and may also be responsible for determining the conformation of the 16S rRNA at the A site. The protein is Small ribosomal subunit protein uS14 of Desulfovibrio desulfuricans (strain ATCC 27774 / DSM 6949 / MB).